The primary structure comprises 242 residues: 3-deoxy-manno-octulosonate cytidylyltransferase (242 aa).

This sequence belongs to the KdsB family.

It localises to the cytoplasm. The catalysed reaction is 3-deoxy-alpha-D-manno-oct-2-ulosonate + CTP = CMP-3-deoxy-beta-D-manno-octulosonate + diphosphate. Its pathway is nucleotide-sugar biosynthesis; CMP-3-deoxy-D-manno-octulosonate biosynthesis; CMP-3-deoxy-D-manno-octulosonate from 3-deoxy-D-manno-octulosonate and CTP: step 1/1. It functions in the pathway bacterial outer membrane biogenesis; lipopolysaccharide biosynthesis. In terms of biological role, activates KDO (a required 8-carbon sugar) for incorporation into bacterial lipopolysaccharide in Gram-negative bacteria. The sequence is that of 3-deoxy-manno-octulosonate cytidylyltransferase from Anaeromyxobacter dehalogenans (strain 2CP-1 / ATCC BAA-258).